Reading from the N-terminus, the 215-residue chain is Ribose-5-phosphate isomerase A (215 aa).

Substrate is bound by residues 26–29, 79–82, and 92–95; these read TGST, DGAD, and KGGG. The active-site Proton acceptor is the E101. K119 contributes to the substrate binding site.

The protein belongs to the ribose 5-phosphate isomerase family. Homodimer.

It carries out the reaction aldehydo-D-ribose 5-phosphate = D-ribulose 5-phosphate. It participates in carbohydrate degradation; pentose phosphate pathway; D-ribose 5-phosphate from D-ribulose 5-phosphate (non-oxidative stage): step 1/1. Catalyzes the reversible conversion of ribose-5-phosphate to ribulose 5-phosphate. The polypeptide is Ribose-5-phosphate isomerase A (Xanthomonas axonopodis pv. citri (strain 306)).